Reading from the N-terminus, the 301-residue chain is Nucleotide-binding protein Noca_2527 (301 aa).

26-33 (GMTGAGRS) contacts ATP. A GTP-binding site is contributed by 77–80 (DVRS).

Belongs to the RapZ-like family.

In terms of biological role, displays ATPase and GTPase activities. The sequence is that of Nucleotide-binding protein Noca_2527 from Nocardioides sp. (strain ATCC BAA-499 / JS614).